The following is a 161-amino-acid chain: NAD(P)H-quinone oxidoreductase subunit I, chloroplastic (161 aa).

4Fe-4S ferredoxin-type domains follow at residues 55-84 and 95-124; these read GRIH…VDWK and LNYS…MTEE. [4Fe-4S] cluster contacts are provided by Cys64, Cys67, Cys70, Cys74, Cys104, Cys107, Cys110, and Cys114.

The protein belongs to the complex I 23 kDa subunit family. As to quaternary structure, NDH is composed of at least 16 different subunits, 5 of which are encoded in the nucleus. [4Fe-4S] cluster serves as cofactor.

The protein resides in the plastid. It localises to the chloroplast thylakoid membrane. It carries out the reaction a plastoquinone + NADH + (n+1) H(+)(in) = a plastoquinol + NAD(+) + n H(+)(out). The catalysed reaction is a plastoquinone + NADPH + (n+1) H(+)(in) = a plastoquinol + NADP(+) + n H(+)(out). Functionally, NDH shuttles electrons from NAD(P)H:plastoquinone, via FMN and iron-sulfur (Fe-S) centers, to quinones in the photosynthetic chain and possibly in a chloroplast respiratory chain. The immediate electron acceptor for the enzyme in this species is believed to be plastoquinone. Couples the redox reaction to proton translocation, and thus conserves the redox energy in a proton gradient. This is NAD(P)H-quinone oxidoreductase subunit I, chloroplastic from Lotus japonicus (Lotus corniculatus var. japonicus).